Consider the following 185-residue polypeptide: Ribosome-recycling factor (185 aa).

It belongs to the RRF family.

The protein localises to the cytoplasm. Responsible for the release of ribosomes from messenger RNA at the termination of protein biosynthesis. May increase the efficiency of translation by recycling ribosomes from one round of translation to another. The sequence is that of Ribosome-recycling factor from Azoarcus sp. (strain BH72).